The sequence spans 953 residues: uncharacterized protein (953 aa).

The next 11 helical transmembrane spans lie at 23–43, 103–123, 148–168, 392–412, 435–455, 481–501, 540–560, 575–595, 599–619, 642–662, and 666–686; these read VVTS…AFLI, YLFI…PILL, GRYF…LYII, VSAI…VGMI, LLGL…MSFL, AYFA…SAAT, ISSG…LGAF, LSSM…VITF, IISP…YIAY, LFQT…LFAV, and WGPI…HLHL. Residues 910-953 are disordered; it reads VPPPYNDVKDEANGEANGEFDTASKENNPFADPKYKEEESRSAV. A compositionally biased stretch (basic and acidic residues) spans 942–953; the sequence is PKYKEEESRSAV. A Phosphoserine modification is found at Ser-949.

This sequence belongs to the CSC1 (TC 1.A.17) family.

The protein resides in the membrane. Functionally, acts as an osmosensitive calcium-permeable cation channel. This is an uncharacterized protein from Saccharomyces cerevisiae (strain ATCC 204508 / S288c) (Baker's yeast).